The chain runs to 487 residues: Photosystem II CP43 reaction center protein (487 aa).

A propeptide spanning residues 1–28 (MKVFVLGWLLKINLMKTLYSQRRFYHVE) is cleaved from the precursor. 5 helical membrane-spanning segments follow: residues 83-107 (LFEV…PHLA), 148-169 (LIGP…RDKN), 192-214 (KSLF…RFVS), 269-289 (KPFA…LSYS), and 305-326 (WYNN…ASQA). Glu-381 serves as a coordination point for [CaMn4O5] cluster. The helical transmembrane segment at 461–485 (RARAAAAGFEKGINRENEPVLSMRP) threads the bilayer.

It belongs to the PsbB/PsbC family. PsbC subfamily. As to quaternary structure, PSII is composed of 1 copy each of membrane proteins PsbA, PsbB, PsbC, PsbD, PsbE, PsbF, PsbH, PsbI, PsbJ, PsbK, PsbL, PsbM, PsbT, PsbX, PsbY, PsbZ, Psb30/Ycf12, at least 3 peripheral proteins of the oxygen-evolving complex and a large number of cofactors. It forms dimeric complexes. Binds multiple chlorophylls and provides some of the ligands for the Ca-4Mn-5O cluster of the oxygen-evolving complex. It may also provide a ligand for a Cl- that is required for oxygen evolution. PSII binds additional chlorophylls, carotenoids and specific lipids. serves as cofactor.

The protein localises to the plastid. The protein resides in the chloroplast thylakoid membrane. Its function is as follows. One of the components of the core complex of photosystem II (PSII). It binds chlorophyll and helps catalyze the primary light-induced photochemical processes of PSII. PSII is a light-driven water:plastoquinone oxidoreductase, using light energy to abstract electrons from H(2)O, generating O(2) and a proton gradient subsequently used for ATP formation. The protein is Photosystem II CP43 reaction center protein of Porphyra purpurea (Red seaweed).